Consider the following 291-residue polypeptide: Signal peptidase I (291 aa).

The Cytoplasmic segment spans residues 1–45; it reads MTMKKLTSTTTTLWDNKLFINNLKNFMQTNTESNNNKTTAQEWKS. A helical transmembrane segment spans residues 46–66; sequence FILVVVIALMIRILIIESFVV. The Periplasmic portion of the chain corresponds to 67-291; the sequence is PTGSMKATIL…IFRNLYSIED (225 aa). Active-site residues include Ser70 and Lys133.

The protein belongs to the peptidase S26 family.

It is found in the cell inner membrane. The catalysed reaction is Cleavage of hydrophobic, N-terminal signal or leader sequences from secreted and periplasmic proteins.. The polypeptide is Signal peptidase I (lepB) (Rickettsia bellii (strain RML369-C)).